A 348-amino-acid chain; its full sequence is Mannonate dehydratase (348 aa).

It belongs to the mannonate dehydratase family. It depends on Fe(2+) as a cofactor. The cofactor is Mn(2+).

The enzyme catalyses D-mannonate = 2-dehydro-3-deoxy-D-gluconate + H2O. Its pathway is carbohydrate metabolism; pentose and glucuronate interconversion. In terms of biological role, catalyzes the dehydration of D-mannonate. This Streptococcus agalactiae serotype V (strain ATCC BAA-611 / 2603 V/R) protein is Mannonate dehydratase.